The following is a 156-amino-acid chain: MSKRNQVSYVRPAEPAFLARFKERVGYKEGPTVETKRIQPQLPEEDGDHSDKEDEQPQVVVLKKGDLSAEEVMKIKAEIKAARADEEPPSADGRIMYRKPVKRSSDEKHSGLSASSKKKKTKEEDEINKQDSVKKNSQKQIKNSSLLSFDNEDENE.

Disordered regions lie at residues 22–64 and 81–156; these read KERV…VLKK and AARA…DENE. Positions 43-56 are enriched in acidic residues; that stretch reads PEEDGDHSDKEDEQ. Position 50 is a phosphoserine (Ser-50). Lys-108 bears the N6-acetyllysine mark. The segment covering 121 to 134 has biased composition (basic and acidic residues); that stretch reads TKEEDEINKQDSVK. A Phosphoserine modification is found at Ser-148.

This is an uncharacterized protein from Bos taurus (Bovine).